An 85-amino-acid chain; its full sequence is uncharacterized protein (85 aa).

This is an uncharacterized protein from Treponema pallidum (strain Nichols).